Consider the following 1313-residue polypeptide: Inter-alpha-trypsin inhibitor heavy chain H6 (1313 aa).

An N-terminal signal peptide occupies residues 1-23 (MSGWRYLICVSFLLTILLELTYQ). The VIT domain occupies 24-150 (GPPVPASSST…EVTFSLAYEE (127 aa)). N-linked (GlcNAc...) asparagine glycosylation is found at N83, N374, N540, and N594. The VWFA domain maps to 283 to 469 (NVVFVIDVSS…LQLKGLYEEI (187 aa)). Disordered stretches follow at residues 612–644 (QPKQ…HGLG), 783–817 (HSKP…TLQV), 856–928 (LKPS…EPLP), and 959–983 (PSRP…SPPN). Residues 623 to 640 (QTSTSAGPDTIMPSSSSR) are compositionally biased toward polar residues. The segment covering 864 to 875 (QISTSISLSKPE) has biased composition (polar residues). Residues 876–888 (TPNPHMPQTPLPP) show a composition bias toward pro residues. Low complexity predominate over residues 907-921 (TISSSTGPSSTTTTS). N-linked (GlcNAc...) asparagine glycosylation is found at N971 and N1231.

This sequence belongs to the ITIH family.

Its subcellular location is the secreted. This Homo sapiens (Human) protein is Inter-alpha-trypsin inhibitor heavy chain H6 (ITIH6).